The primary structure comprises 163 residues: S-fimbrial adhesin protein SfaS (163 aa).

A signal peptide spans 1–22; it reads MKLKAIILATGLINCIAFSAQA. Residues Cys-38 and Cys-75 are joined by a disulfide bond. The involved in sialic acid binding stretch occupies residues 138 to 144; that stretch reads KARAVSK.

The protein belongs to the fimbrial protein family.

The protein localises to the fimbrium. Fimbriae (also called pili), polar filaments radiating from the surface of the bacterium to a length of 0.5-1.5 micrometers and numbering 100-300 per cell, enable bacteria to colonize the epithelium of specific host organs. Functionally, a minor fimbrial subunit, this protein is necessary for full expression of S-specific binding. S-fimbrial adhesins enable pathogenic E.coli causing urinary-tract infections or newborn meningitis to attach to glycoproteins terminating with alpha-sialic acid-(2-3)-beta-Gal. This protein binds to the alpha-sialic acid-(2-3)-beta-Gal and is thus responsible for erythrocyte recognition and hemagglutination. This Escherichia coli O6:K15:H31 (strain 536 / UPEC) protein is S-fimbrial adhesin protein SfaS (sfaS).